We begin with the raw amino-acid sequence, 379 residues long: Homoserine O-succinyltransferase (379 aa).

The AB hydrolase-1 domain occupies Asn51–Leu360. Catalysis depends on Ser157, which acts as the Nucleophile. Substrate is bound at residue Arg227. Catalysis depends on residues Asp323 and His356. Asp357 contributes to the substrate binding site.

This sequence belongs to the AB hydrolase superfamily. MetX family. As to quaternary structure, homodimer.

It localises to the cytoplasm. It carries out the reaction L-homoserine + succinyl-CoA = O-succinyl-L-homoserine + CoA. The protein operates within amino-acid biosynthesis; L-methionine biosynthesis via de novo pathway; O-succinyl-L-homoserine from L-homoserine: step 1/1. In terms of biological role, transfers a succinyl group from succinyl-CoA to L-homoserine, forming succinyl-L-homoserine. The chain is Homoserine O-succinyltransferase from Pseudomonas paraeruginosa (strain DSM 24068 / PA7) (Pseudomonas aeruginosa (strain PA7)).